The sequence spans 174 residues: FMN-dependent NADPH-azoreductase (174 aa).

FMN-binding positions include 9-11 (TPR), 15-16 (RT), 73-76 (EYHS), and Gly-106.

The protein belongs to the azoreductase type 2 family. As to quaternary structure, homotetramer. Requires FMN as cofactor.

Its function is as follows. Catalyzes the reductive cleavage of azo bond in aromatic azo compounds to the corresponding amines. Requires NADPH, but not NADH, as an electron donor for its activity. The sequence is that of FMN-dependent NADPH-azoreductase (azr) from Bacillus subtilis (strain 168).